We begin with the raw amino-acid sequence, 1380 residues long: DNA-directed RNA polymerase subunit beta (1380 aa).

This sequence belongs to the RNA polymerase beta chain family. The RNAP catalytic core consists of 2 alpha, 1 beta, 1 beta' and 1 omega subunit. When a sigma factor is associated with the core the holoenzyme is formed, which can initiate transcription.

The catalysed reaction is RNA(n) + a ribonucleoside 5'-triphosphate = RNA(n+1) + diphosphate. Functionally, DNA-dependent RNA polymerase catalyzes the transcription of DNA into RNA using the four ribonucleoside triphosphates as substrates. The polypeptide is DNA-directed RNA polymerase subunit beta (Rhizobium rhizogenes (strain K84 / ATCC BAA-868) (Agrobacterium radiobacter)).